The chain runs to 313 residues: Aspartate carbamoyltransferase catalytic subunit (313 aa).

Residues arginine 55 and threonine 56 each coordinate carbamoyl phosphate. An L-aspartate-binding site is contributed by lysine 83. Residues arginine 105, histidine 138, and glutamine 141 each coordinate carbamoyl phosphate. L-aspartate is bound by residues arginine 171 and arginine 225. The carbamoyl phosphate site is built by glycine 266 and proline 267.

It belongs to the aspartate/ornithine carbamoyltransferase superfamily. ATCase family. In terms of assembly, heterododecamer (2C3:3R2) of six catalytic PyrB chains organized as two trimers (C3), and six regulatory PyrI chains organized as three dimers (R2).

The enzyme catalyses carbamoyl phosphate + L-aspartate = N-carbamoyl-L-aspartate + phosphate + H(+). It participates in pyrimidine metabolism; UMP biosynthesis via de novo pathway; (S)-dihydroorotate from bicarbonate: step 2/3. Catalyzes the condensation of carbamoyl phosphate and aspartate to form carbamoyl aspartate and inorganic phosphate, the committed step in the de novo pyrimidine nucleotide biosynthesis pathway. This Corynebacterium diphtheriae (strain ATCC 700971 / NCTC 13129 / Biotype gravis) protein is Aspartate carbamoyltransferase catalytic subunit.